A 72-amino-acid chain; its full sequence is Translation initiation factor IF-1 (72 aa).

One can recognise an S1-like domain in the interval 1–72; that stretch reads MAKEDNIEMQ…SKGRIVFRSR (72 aa).

Belongs to the IF-1 family. Component of the 30S ribosomal translation pre-initiation complex which assembles on the 30S ribosome in the order IF-2 and IF-3, IF-1 and N-formylmethionyl-tRNA(fMet); mRNA recruitment can occur at any time during PIC assembly.

The protein resides in the cytoplasm. Functionally, one of the essential components for the initiation of protein synthesis. Stabilizes the binding of IF-2 and IF-3 on the 30S subunit to which N-formylmethionyl-tRNA(fMet) subsequently binds. Helps modulate mRNA selection, yielding the 30S pre-initiation complex (PIC). Upon addition of the 50S ribosomal subunit IF-1, IF-2 and IF-3 are released leaving the mature 70S translation initiation complex. The protein is Translation initiation factor IF-1 of Salmonella paratyphi A (strain ATCC 9150 / SARB42).